The primary structure comprises 992 residues: Translation initiation factor IF-2 (992 aa).

2 disordered regions span residues 154–173 (RRLRDEQAAQEAAREREREA) and 338–399 (AAPG…RPES). The 170-residue stretch at 492 to 661 (PRAPVVTVMG…LLQAEVLELK (170 aa)) folds into the tr-type G domain. Positions 501 to 508 (GHVDHGKT) are G1. 501-508 (GHVDHGKT) serves as a coordination point for GTP. Residues 526–530 (GITQH) form a G2 region. Positions 547–550 (DTPG) are G3. GTP contacts are provided by residues 547–551 (DTPGH) and 601–604 (NKID). The tract at residues 601–604 (NKID) is G4. Residues 637–639 (SAH) are G5.

Belongs to the TRAFAC class translation factor GTPase superfamily. Classic translation factor GTPase family. IF-2 subfamily.

The protein localises to the cytoplasm. In terms of biological role, one of the essential components for the initiation of protein synthesis. Protects formylmethionyl-tRNA from spontaneous hydrolysis and promotes its binding to the 30S ribosomal subunits. Also involved in the hydrolysis of GTP during the formation of the 70S ribosomal complex. This chain is Translation initiation factor IF-2, found in Polaromonas naphthalenivorans (strain CJ2).